The following is a 35-amino-acid chain: Potassium channel toxin alpha-KTx 23.2 (35 aa).

Intrachain disulfides connect Cys6–Cys26, Cys12–Cys31, and Cys16–Cys33.

This sequence belongs to the short scorpion toxin superfamily. Potassium channel inhibitor family. Alpha-KTx 23 subfamily. Expressed by the venom gland.

It localises to the secreted. In terms of biological role, selectively and irreversibly binds (K(d)=2.9 pM) and blocks Kv1.3/KCNA3 potassium channels of human T-lymphocytes. Weakly blocks Kv1.2/KCNA2 (9%). This Vaejovis mexicanus smithi (Mexican scorpion) protein is Potassium channel toxin alpha-KTx 23.2.